A 305-amino-acid chain; its full sequence is NAD-dependent protein deacylase sirtuin-5, mitochondrial (305 aa).

Residues 1–32 (MIVRQLWCSRGSTSHLCAAVRLNWRSPKMTRP) constitute a mitochondrion transit peptide. The region spanning 33–303 (SSDLTAFREH…PPALERHESE (271 aa)) is the Deacetylase sirtuin-type domain. 54-73 (GAGVSAESGVPTFRGPGGFW) is a binding site for NAD(+). Substrate-binding residues include Tyr-98 and Arg-101. 136-139 (QNID) contributes to the NAD(+) binding site. His-154 serves as the catalytic Proton acceptor. Residues Cys-162, Cys-165, Cys-203, and Cys-208 each coordinate Zn(2+). Residues 245–247 (GTS), 271–273 (NME), and Cys-289 contribute to the NAD(+) site.

It belongs to the sirtuin family. Class III subfamily. Requires Zn(2+) as cofactor.

The protein resides in the mitochondrion. The protein localises to the cytoplasm. It localises to the cytosol. Its subcellular location is the nucleus. The enzyme catalyses N(6)-malonyl-L-lysyl-[protein] + NAD(+) + H2O = 2''-O-malonyl-ADP-D-ribose + nicotinamide + L-lysyl-[protein]. It carries out the reaction N(6)-succinyl-L-lysyl-[protein] + NAD(+) + H2O = 2''-O-succinyl-ADP-D-ribose + nicotinamide + L-lysyl-[protein]. The catalysed reaction is N(6)-glutaryl-L-lysyl-[protein] + NAD(+) + H2O = 2''-O-glutaryl-ADP-D-ribose + nicotinamide + L-lysyl-[protein]. NAD-dependent lysine demalonylase, desuccinylase and deglutarylase that specifically removes malonyl, succinyl and glutaryl groups on target proteins. Has weak NAD-dependent protein deacetylase activity; however this activity may not be physiologically relevant in vivo. This chain is NAD-dependent protein deacylase sirtuin-5, mitochondrial (sirt5), found in Danio rerio (Zebrafish).